Reading from the N-terminus, the 208-residue chain is Holliday junction resolvase RecU (208 aa).

4 residues coordinate Mg(2+): Thr87, Asp89, Glu102, and Gln121.

It belongs to the RecU family. It depends on Mg(2+) as a cofactor.

The protein localises to the cytoplasm. It carries out the reaction Endonucleolytic cleavage at a junction such as a reciprocal single-stranded crossover between two homologous DNA duplexes (Holliday junction).. Endonuclease that resolves Holliday junction intermediates in genetic recombination. Cleaves mobile four-strand junctions by introducing symmetrical nicks in paired strands. Promotes annealing of linear ssDNA with homologous dsDNA. Required for DNA repair, homologous recombination and chromosome segregation. The chain is Holliday junction resolvase RecU from Staphylococcus aureus (strain Mu3 / ATCC 700698).